The following is a 294-amino-acid chain: MVCFSSLFVAASAIAGVFASPVDHEQLAKRQSTPSSQGTHDGYFYSWWTDGGAAATYTNLAGGEYSVSWSNGGNLVGGKGWNPGSARTITYSGTYNPNGNSYLAVYGWTRNPQPWLTPLVVEYYVVENFGTYNPSSGATARGQVTHDGALYRLFESTRTNQPSIDGTATFQQYWAVRDVKRTGGTVNMATFFNAWTAAGMRLGTHNYQVVATEGYFSSGSARINVAGGGGSTPSPPSTPSPPTTPSPPPVTPPPSGGGSCAARWGQCGGSGWNGATCCSAGTCQAQNQWYSQCL.

The signal sequence occupies residues 1–19; sequence MVCFSSLFVAASAIAGVFA. Positions 31-226 constitute a GH11 domain; the sequence is QSTPSSQGTH…SSGSARINVA (196 aa). The active-site Nucleophile is glutamate 122. Catalysis depends on glutamate 213, which acts as the Proton donor. A CBM1 domain is found at 259–294; that stretch reads SCAARWGQCGGSGWNGATCCSAGTCQAQNQWYSQCL.

It belongs to the glycosyl hydrolase 11 (cellulase G) family.

It carries out the reaction Endohydrolysis of (1-&gt;4)-beta-D-xylosidic linkages in xylans.. It functions in the pathway glycan degradation; xylan degradation. Its function is as follows. Endo-1,4-beta-xylanase involved in the hydrolysis of xylan, a major structural heterogeneous polysaccharide found in plant biomass representing the second most abundant polysaccharide in the biosphere, after cellulose. Exhibits immunity-inducing activity in Nicotiana benthamiana. Can induce strong oxidative burst, activate the expression of defense-related genes, and increase resistance against oomycete and fungal pathogens in N.benthamiana. This Verticillium dahliae (strain VdLs.17 / ATCC MYA-4575 / FGSC 10137) (Verticillium wilt) protein is Ethylene-inducing xylanase 3.